The sequence spans 181 residues: Transcription termination/antitermination protein NusG (181 aa).

The 29-residue stretch at 130–158 (PGETVRVNDGPFSDFNGIVEEVDYEKNRL) folds into the KOW domain.

This sequence belongs to the NusG family. As to quaternary structure, monomer. Interacts with the transcription termination factor Rho and with RNA polymerase.

Functionally, participates in transcription elongation, termination and antitermination. In the absence of Rho, increases the rate of transcription elongation by the RNA polymerase (RNAP), probably by partially suppressing pausing. In the presence of Rho, modulates most Rho-dependent termination events by interacting with the RNAP to render the complex more susceptible to the termination activity of Rho. May be required to overcome a kinetic limitation of Rho to function at certain terminators. Also involved in ribosomal RNA transcriptional antitermination. In Buchnera aphidicola subsp. Baizongia pistaciae (strain Bp), this protein is Transcription termination/antitermination protein NusG.